The sequence spans 422 residues: MPAGRRGPAAQSARRPPPLLPLLLLLCVLGAPRAGSGAHTAVISPQDPTLLIGSSLLATCSVHGDPPGATAEGLYWTLNGRRLPPELSRVLNASTLALALANLNGSRQRSGDNLVCHARDGSILAGSCLYVGLPPEKPVNISCWSKNMKDLTCRWTPGAHGETFLHTNYSLKYKLRWYGQDNTCEEYHTVGPHSCHIPKDLALFTPYEIWVEATNRLGSARSDVLTLDILDVVTTDPPPDVHVSRVGGLEDQLSVRWVSPPALKDFLFQAKYQIRYRVEDSVDWKVVDDVSNQTSCRLAGLKPGTVYFVQVRCNPFGIYGSKKAGIWSEWSHPTAASTPRSERPGPGGGACEPRGGEPSSGPVRRELKQFLGWLKKHAYCSNLSFRLYDQWRAWMQKSHKTRNQDEGILPSGRRGTARGPAR.

The first 37 residues, Met1–Gly37, serve as a signal peptide directing secretion. An Ig-like C2-type domain is found at Ala38–Val131. 3 N-linked (GlcNAc...) asparagine glycosylation sites follow: Asn92, Asn104, and Asn140. Fibronectin type-III domains follow at residues Lys137–Val232 and Pro237–Ser341. The cysteines at positions 143 and 153 are disulfide-linked. Residue Asn168 is glycosylated (N-linked (GlcNAc...) asparagine). Cys184 and Cys195 are disulfide-bonded. Ser219 bears the Phosphoserine mark. N-linked (GlcNAc...) asparagine glycosylation is present at Asn292. A WSXWS motif motif is present at residues Trp327–Ser331. The segment at His332–Val363 is disordered. Asn382 carries N-linked (GlcNAc...) asparagine glycosylation. Residues His399–Arg422 form a disordered region.

This sequence belongs to the type I cytokine receptor family. Type 3 subfamily. In terms of assembly, forms covalent di- and tetramers. Forms a heteromeric complex with cardiotrophin-like cytokine CLCF1/CLC; the CRLF1-CLCF1 complex is a ligand for the ciliary neurotrophic factor receptor/CNTFR. The CRLF1-CLCF1 heterodimer binds SORL1 (via N-terminal ectodomain); within this complex, the interaction is mediated predominantly by the CRLF1 moiety. The tripartite signaling complex formed by CRLF1, CLCF1 and CNTFR also binds SORL1. Highest levels of expression observed in spleen, thymus, lymph node, appendix, bone marrow, stomach, placenta, heart, thyroid and ovary. Strongly expressed also in fetal lung.

Its subcellular location is the secreted. In complex with CLCF1, forms a heterodimeric neurotropic cytokine that plays a crucial role during neuronal development. May also play a regulatory role in the immune system. The chain is Cytokine receptor-like factor 1 (CRLF1) from Homo sapiens (Human).